We begin with the raw amino-acid sequence, 1026 residues long: Multidrug resistance protein MdtC (1026 aa).

A run of 11 helical transmembrane segments spans residues 12-32, 333-353, 360-380, 387-407, 431-451, 463-483, 528-548, 853-873, 897-917, 953-973, and 984-1004; these read VATTLLTLAIAISGVISFSLL, EVEQSLVIAIGLVILVVFIFL, LIPAVAVPVSLIGSFTAMYLC, LSLMALTIATGFVVDDAIVVL, VGFTVLSMSVSLVAVFIPLLL, FAVTLSVSIGLSLIISLTLTP, WVLAVFLATIALNVWLYVSIP, LLLIAAAIATVYIVLGILYES, LFGAPFSLIALIGIMLLIGIV, PIMMTTLAALFGALPLVLTHG, and ITIVGGLIVSQLLTLYTTPVV.

The protein belongs to the resistance-nodulation-cell division (RND) (TC 2.A.6) family. MdtC subfamily. As to quaternary structure, part of a tripartite efflux system composed of MdtA, MdtB and MdtC. MdtC forms a heteromultimer with MdtB.

The protein localises to the cell inner membrane. The chain is Multidrug resistance protein MdtC from Serratia proteamaculans (strain 568).